Consider the following 234-residue polypeptide: Sugar fermentation stimulation protein homolog (234 aa).

This sequence belongs to the SfsA family.

In Shewanella sp. (strain ANA-3), this protein is Sugar fermentation stimulation protein homolog.